We begin with the raw amino-acid sequence, 616 residues long: Chaperone protein HscA (616 aa).

The protein belongs to the heat shock protein 70 family.

In terms of biological role, chaperone involved in the maturation of iron-sulfur cluster-containing proteins. Has a low intrinsic ATPase activity which is markedly stimulated by HscB. Involved in the maturation of IscU. The sequence is that of Chaperone protein HscA from Salmonella newport (strain SL254).